A 376-amino-acid polypeptide reads, in one-letter code: Chaperone protein DnaJ (376 aa).

A J domain is found at 5-70 (DYYEVLGVAK…QKRAAYDQYG (66 aa)). A CR-type zinc finger spans residues 136–214 (GYDTQIRVPS…CHGSGKVKET (79 aa)). Positions 149, 152, 166, 169, 188, 191, 202, and 205 each coordinate Zn(2+). CXXCXGXG motif repeat units lie at residues 149–156 (CGICHGSG), 166–173 (CPTCHGQG), 188–195 (CPKCHGTG), and 202–209 (CVHCHGSG).

The protein belongs to the DnaJ family. As to quaternary structure, homodimer. Zn(2+) serves as cofactor.

It localises to the cytoplasm. Its function is as follows. Participates actively in the response to hyperosmotic and heat shock by preventing the aggregation of stress-denatured proteins and by disaggregating proteins, also in an autonomous, DnaK-independent fashion. Unfolded proteins bind initially to DnaJ; upon interaction with the DnaJ-bound protein, DnaK hydrolyzes its bound ATP, resulting in the formation of a stable complex. GrpE releases ADP from DnaK; ATP binding to DnaK triggers the release of the substrate protein, thus completing the reaction cycle. Several rounds of ATP-dependent interactions between DnaJ, DnaK and GrpE are required for fully efficient folding. Also involved, together with DnaK and GrpE, in the DNA replication of plasmids through activation of initiation proteins. The chain is Chaperone protein DnaJ from Burkholderia thailandensis (strain ATCC 700388 / DSM 13276 / CCUG 48851 / CIP 106301 / E264).